A 426-amino-acid polypeptide reads, in one-letter code: Na(+)/H(+) antiporter 1 (426 aa).

A run of 12 helical transmembrane segments spans residues 1–21, 29–49, 57–77, 95–115, 120–140, 158–178, 184–204, 208–228, 236–256, 286–306, 309–329, and 382–402; these read MELM…SLVA, IPDI…LQII, IFEY…AFTM, ITFL…LNLP, VGYL…IPVF, IFND…FGLF, LIDL…LAKI, IIIH…GAML, LLPS…IMGL, VFIF…NYFI, LLVA…LGLI, and IAGT…ILEA.

Belongs to the monovalent cation:proton antiporter 1 (CPA1) transporter (TC 2.A.36) family.

Its subcellular location is the cell membrane. This is a Na(+)/H(+) antiporter. Can also transport lithium. The chain is Na(+)/H(+) antiporter 1 from Methanocaldococcus jannaschii (strain ATCC 43067 / DSM 2661 / JAL-1 / JCM 10045 / NBRC 100440) (Methanococcus jannaschii).